The sequence spans 1208 residues: DNA-directed RNA polymerase subunit beta (1208 aa).

The disordered stretch occupies residues 1182-1208; it reads EKKAAEQVEDEKDDVIQNFETAEDNLD.

It belongs to the RNA polymerase beta chain family. As to quaternary structure, the RNAP catalytic core consists of 2 alpha, 1 beta, 1 beta' and 1 omega subunit. When a sigma factor is associated with the core the holoenzyme is formed, which can initiate transcription.

It catalyses the reaction RNA(n) + a ribonucleoside 5'-triphosphate = RNA(n+1) + diphosphate. Its function is as follows. DNA-dependent RNA polymerase catalyzes the transcription of DNA into RNA using the four ribonucleoside triphosphates as substrates. This chain is DNA-directed RNA polymerase subunit beta, found in Enterococcus faecium (Streptococcus faecium).